The following is a 320-amino-acid chain: D-amino-acid oxidase (320 aa).

The FAD site is built by alanine 13, glycine 14, valine 15, threonine 42, threonine 43, serine 44, glycine 48, and alanine 49. Tyrosine 220 and arginine 274 together coordinate D-proline. 2 residues coordinate D-serine: tyrosine 220 and arginine 274. 5 residues coordinate FAD: arginine 274, glycine 299, glycine 300, glycine 302, and threonine 304. Glycine 300 provides a ligand contact to D-proline. Glycine 300 provides a ligand contact to D-serine.

Belongs to the DAMOX/DASOX family. It depends on FAD as a cofactor.

The protein resides in the cytoplasm. It localises to the secreted. Its subcellular location is the cell wall. The enzyme catalyses a D-alpha-amino acid + O2 + H2O = a 2-oxocarboxylate + H2O2 + NH4(+). Catalyzes the oxidative deamination of D-amino acids with broad substrate specificity. Enables the organism to utilize D-amino acids as a source of nutrients. Enables the organism to utilize glycine as a carbon source. This chain is D-amino-acid oxidase, found in Mycobacterium tuberculosis (strain ATCC 25177 / H37Ra).